The following is a 414-amino-acid chain: EARP and GARP complex-interacting protein 1 (414 aa).

The residue at position 1 (Met1) is an N-acetylmethionine. 4 WD repeats span residues 159–199, 209–249, 253–293, and 297–337; these read TAHG…SQAV, KGQL…QIYC, AHGQ…EPVK, and EHSH…SEPF. The tract at residues 337–362 is disordered; the sequence is FGHLVDDDDISDQEDHRSEEKSKEPL. Phosphoserine is present on Ser347. Over residues 349 to 362 the composition is skewed to basic and acidic residues; sequence QEDHRSEEKSKEPL. A WD 5 repeat occupies 372–412; sequence EHEDSVYAVDWSSADPWLFASLSYDGRLVINRVPRALKYHI.

The protein belongs to the WD repeat EIPR1 family. In terms of assembly, interacts with two multisubunit tethering complexes: EARP composed of VPS50, VPS51, VPS52 and VPS53 subunits and GARP complex composed of VPS51, VPS52, VPS53 and VPS54 subunits. Interacts with SNAP29.

Its subcellular location is the golgi apparatus. The protein resides in the trans-Golgi network. Functionally, acts as a component of endosomal retrieval machinery that is involved in protein transport from early endosomes to either recycling endosomes or the trans-Golgi network. Mediates the recruitment of Golgi-associated retrograde protein (GARP) complex to the trans-Golgi network and controls early endosome-to-Golgi transport of internalized protein. Promotes the recycling of internalized transferrin receptor (TFRC) to the plasma membrane through interaction with endosome-associated recycling protein (EARP) complex. Controls proper insulin distribution and secretion, and retention of cargo in mature dense core vesicles. Required for the stability of the endosome-associated retrograde protein (EARP) complex subunits and for proper localization and association of EARP with membranes. The polypeptide is EARP and GARP complex-interacting protein 1 (Pongo abelii (Sumatran orangutan)).